Consider the following 384-residue polypeptide: Acetylornithine aminotransferase (384 aa).

Pyridoxal 5'-phosphate is bound by residues 95–96 (GA) and F122. R125 serves as a coordination point for N(2)-acetyl-L-ornithine. 207–210 (DEIQ) contacts pyridoxal 5'-phosphate. Position 236 is an N6-(pyridoxal phosphate)lysine (K236). S264 is a N(2)-acetyl-L-ornithine binding site. A pyridoxal 5'-phosphate-binding site is contributed by T265.

This sequence belongs to the class-III pyridoxal-phosphate-dependent aminotransferase family. ArgD subfamily. In terms of assembly, homodimer. Pyridoxal 5'-phosphate serves as cofactor.

It localises to the cytoplasm. It carries out the reaction N(2)-acetyl-L-ornithine + 2-oxoglutarate = N-acetyl-L-glutamate 5-semialdehyde + L-glutamate. It participates in amino-acid biosynthesis; L-arginine biosynthesis; N(2)-acetyl-L-ornithine from L-glutamate: step 4/4. This Halalkalibacterium halodurans (strain ATCC BAA-125 / DSM 18197 / FERM 7344 / JCM 9153 / C-125) (Bacillus halodurans) protein is Acetylornithine aminotransferase.